The chain runs to 182 residues: MQTEHVILLNAQGVPTGTLEKYAAHTADTLLHLAFSSWLFNAKGQLLVTRRALSKKAWPGVWTNSVCGHPQLGESNEEAVIRRCRYELGVEITPPESIYPDFRYRATDPNGIVENEVCPVFAARTTSALQINDDEVMDYQWCDLAAVLRGIDATPWAFSPWMVMQATNREARKRLSAFTQLK.

Residues histidine 25 and histidine 32 each contribute to the Mn(2+) site. Residues 30–164 (LLHLAFSSWL…PWAFSPWMVM (135 aa)) enclose the Nudix hydrolase domain. The active site involves cysteine 67. Histidine 69 lines the Mn(2+) pocket. Position 87 (glutamate 87) interacts with Mg(2+). Mn(2+) contacts are provided by glutamate 114 and glutamate 116. The active site involves glutamate 116.

This sequence belongs to the IPP isomerase type 1 family. Homodimer. Mg(2+) serves as cofactor. Requires Mn(2+) as cofactor.

The protein localises to the cytoplasm. The catalysed reaction is isopentenyl diphosphate = dimethylallyl diphosphate. Its pathway is isoprenoid biosynthesis; dimethylallyl diphosphate biosynthesis; dimethylallyl diphosphate from isopentenyl diphosphate: step 1/1. Functionally, catalyzes the 1,3-allylic rearrangement of the homoallylic substrate isopentenyl (IPP) to its highly electrophilic allylic isomer, dimethylallyl diphosphate (DMAPP). This Escherichia coli O45:K1 (strain S88 / ExPEC) protein is Isopentenyl-diphosphate Delta-isomerase.